A 419-amino-acid polypeptide reads, in one-letter code: Napsin-A (419 aa).

An N-terminal signal peptide occupies residues 1 to 16 (MSPLLLLLLCLLLGNL). A Peptidase A1 domain is found at 73–394 (YFGTIGLGTP…KNVGPRVGLA (322 aa)). N-linked (GlcNAc...) asparagine glycosylation is present at N85. D91 is an active-site residue. A disulfide bridge connects residues C104 and C111. Residues N128 and N149 are each glycosylated (N-linked (GlcNAc...) asparagine). C269 and C273 are joined by a disulfide. D278 is a catalytic residue. C312 and C349 are oxidised to a cystine. N-linked (GlcNAc...) asparagine glycosylation occurs at N331. The segment at 391–419 (VGLARAQSRSTDRAERRTTQAQFFKRRPG) is disordered.

It belongs to the peptidase A1 family. In terms of tissue distribution, expressed at the highest levels in the kidney, at a moderate level in the lung, and at low levels in the spleen and adipose tissue.

It is found in the secreted. In terms of biological role, may be involved in processing of pneumocyte surfactant precursors. The protein is Napsin-A (Napsa) of Mus musculus (Mouse).